The following is a 357-amino-acid chain: Protein Wnt-5b (357 aa).

Positions methionine 1–proline 18 are cleaved as a signal peptide. The cysteines at positions 81 and 92 are disulfide-linked. N-linked (GlcNAc...) asparagine glycans are attached at residues asparagine 91 and asparagine 97. Intrachain disulfides connect cysteine 131/cysteine 139, cysteine 141/cysteine 159, cysteine 215/cysteine 229, cysteine 217/cysteine 224, cysteine 286/cysteine 317, cysteine 302/cysteine 312, cysteine 316/cysteine 356, cysteine 332/cysteine 347, cysteine 334/cysteine 344, and cysteine 339/cysteine 340. Serine 221 is lipidated: O-palmitoleoyl serine; by PORCN. 2 N-linked (GlcNAc...) asparagine glycosylation sites follow: asparagine 289 and asparagine 303.

The protein belongs to the Wnt family. In terms of processing, palmitoleoylation is required for efficient binding to frizzled receptors. Depalmitoleoylation leads to Wnt signaling pathway inhibition. As to expression, predominantly in neuroectodermal tissues.

It localises to the secreted. Its subcellular location is the extracellular space. It is found in the extracellular matrix. Its function is as follows. Ligand for members of the frizzled family of seven transmembrane receptors. Probable developmental protein. May be a signaling molecule which affects the development of discrete regions of tissues. Is likely to signal over only few cell diameters. The protein is Protein Wnt-5b (WNT-5B) of Ambystoma mexicanum (Axolotl).